A 329-amino-acid polypeptide reads, in one-letter code: MAAPAPAGAAASPSPKPQLPSPFAELVKTPSGLEKVVLRGARNCCAEIYLYGGQVTSWKNDNGEELLFLSSKAIFKPPKAIRGGIPICLPQFGTHGNLEQHGFARNRFWSIDNDPPPLPVNPAIKAFVDLILRPAEEDLKIWPHSFEFRLRVALGPSGDLSLTSRIRNTNTDGRPFSYTFAYHTYFFVSDISEVRVEGLETMDYLDNLKAKERFTEQGDAIVFESEVDKVYLAAPSKIAIIDHEKKKTFVVTKEGLPDAVVWNPWDKKAKAMQDFGDAEYKNMLCVEPAAVEKPITLKPGEEWRGRIALSAVPSSYCSGQLDPLKVLHG.

The segment covering 1-13 (MAAPAPAGAAASP) has biased composition (low complexity). Residues 1 to 20 (MAAPAPAGAAASPSPKPQLP) are disordered. 3 residues coordinate substrate: Arg82, Gln100, and Arg105. Residue His183 is part of the active site. Asp228 serves as a coordination point for substrate. Glu287 is a catalytic residue.

Belongs to the glucose-6-phosphate 1-epimerase family.

The enzyme catalyses alpha-D-glucose 6-phosphate = beta-D-glucose 6-phosphate. In Cenchrus ciliaris (Buffelgrass), this protein is Putative glucose-6-phosphate 1-epimerase.